The primary structure comprises 339 residues: Casein kinase II subunit alpha' (339 aa).

Residues 50 to 334 enclose the Protein kinase domain; sequence YEIINKIGRG…AKEAMDHKFF (285 aa). ATP-binding positions include 56 to 64 and Lys79; that span reads IGRGKYSEV. Asp167 functions as the Proton acceptor in the catalytic mechanism.

The protein belongs to the protein kinase superfamily. Ser/Thr protein kinase family. CK2 subfamily. As to quaternary structure, tetramer composed of an alpha chain, an alpha', one beta chain and one beta' chain. Interacts with FACT subunits POB3 and SPT16. Interacts with NAP1. Interacts with YTA7.

The enzyme catalyses L-seryl-[protein] + ATP = O-phospho-L-seryl-[protein] + ADP + H(+). It carries out the reaction L-threonyl-[protein] + ATP = O-phospho-L-threonyl-[protein] + ADP + H(+). Its function is as follows. Catalytic subunit of a constitutively active serine/threonine-protein kinase complex that phosphorylates a large number of substrates containing acidic residues C-terminal to the phosphorylated serine or threonine. Phosphorylates YTA7 during S-phase to promote transcription of histones. This Saccharomyces cerevisiae (strain ATCC 204508 / S288c) (Baker's yeast) protein is Casein kinase II subunit alpha'.